The sequence spans 885 residues: Cadherin-1 (885 aa).

Positions 1 to 26 (MGPRYGGAPALLLPLLLLLQVSSGLC) are cleaved as a signal peptide. Positions 27–156 (QEPEPCRPGF…SQHGLRRQKR (130 aa)) are excised as a propeptide. Basic residues predominate over residues 121-131 (KAATHHHHHHH). Residues 121-141 (KAATHHHHHHHDAPSKTQTEV) are disordered. Over 157-712 (DWVIPPISCP…YAEAGLQVPA (556 aa)) the chain is Extracellular. Cadherin domains are found at residues 158–264 (WVIP…KPEF), 265–377 (TQAV…PPIF), 378–488 (NPTT…APIF), 489–597 (IPCP…GPIP), and 607–688 (KNPQ…VFVC). Asp259 is a Ca(2+) binding site. The O-linked (Man...) serine glycan is linked to Ser282. Thr287 carries O-linked (Man...) threonine glycosylation. Residue Asp290 coordinates Ca(2+). O-linked (Man...) threonine glycans are attached at residues Thr360, Thr472, Thr474, and Thr511. N-linked (GlcNAc...) asparagine glycosylation is present at Asn560. Residues Thr578, Thr580, and Thr582 are each glycosylated (O-linked (Man...) threonine). Asn639 carries N-linked (GlcNAc...) asparagine glycosylation. A helical membrane pass occupies residues 713–733 (ILGILGGILALLILILLLLLF). Topologically, residues 734-885 (VRRRRVVKEP…ADMYGGGEDD (152 aa)) are cytoplasmic. The tract at residues 750-770 (DTRDNVYYYDEEGGGEEDQDF) is disordered. Tyr756, Tyr757, and Tyr758 each carry phosphotyrosine; by SRC. Positions 758–770 (YDEEGGGEEDQDF) are enriched in acidic residues. Residues 761–772 (EGGGEEDQDFDL) are required for binding CTNND1 and PSEN1. Phosphoserine is present on residues Ser773, Ser796, Ser841, Ser843, and Ser849. The interval 792–811 (PTLLSVPQYRPRPANPDEIG) is disordered. The interval 814–885 (IDENLKAADT…ADMYGGGEDD (72 aa)) is required for binding alpha, beta and gamma catenins.

As to quaternary structure, homodimer; disulfide-linked. Component of an E-cadherin/ catenin adhesion complex composed of at least E-cadherin/CDH1, beta-catenin/CTNNB1 or gamma-catenin/JUP, and potentially alpha-catenin/CTNNA1; the complex is located to adherens junctions. Found in a complex composed of CDH1, RAP1A and PKP3; PKP3 acts as a scaffold protein within the complex, the complex is required for CDH1 localization to mature desmosome cell junctions. Interacts with the TRPV4 and CTNNB1 complex. Interacts with CTNND1. The stable association of CTNNA1 is controversial as CTNNA1 was shown not to bind to F-actin when assembled in the complex. Alternatively, the CTNNA1-containing complex may be linked to F-actin by other proteins such as LIMA1. Interaction with PSEN1, cleaves CDH1 resulting in the disassociation of cadherin-based adherens junctions (CAJs). Interacts with AJAP1 and DLGAP5. Interacts with TBC1D2. Interacts with LIMA1. Interacts with CAV1. Interacts with PIP5K1C. Interacts with RAB8B. Interacts with DDR1; this stabilizes CDH1 at the cell surface and inhibits its internalization. Interacts with RAPGEF2. Interacts with KLRG1. Forms a ternary complex composed of ADAM10, CADH1 and EPHA4; within the complex, CADH1 is cleaved by ADAM10 which disrupts adherens junctions. Interacts with SPEF1. Interacts with CTNNB1 and PKP2. Interacts with AMOTL2; the interaction may facilitate binding of radial actin fibers to cell junction complexes. Interacts with DSG3; the interaction is required for CDH1 localization to developing adherens junctions. In terms of processing, during apoptosis or with calcium influx, cleaved by a membrane-bound metalloproteinase (ADAM10), PS1/gamma-secretase and caspase-3. Processing by the metalloproteinase, induced by calcium influx, causes disruption of cell-cell adhesion and the subsequent release of beta-catenin into the cytoplasm. The residual membrane-tethered cleavage product is rapidly degraded via an intracellular proteolytic pathway. Cleavage by caspase-3 releases the cytoplasmic tail resulting in disintegration of the actin microfilament system. The gamma-secretase-mediated cleavage promotes disassembly of adherens junctions. During development of the cochlear organ of Corti, cleavage by ADAM10 at adherens junctions promotes pillar cell separation. N-glycosylation at Asn-639 is essential for expression, folding and trafficking. Addition of bisecting N-acetylglucosamine by MGAT3 modulates its cell membrane location. Post-translationally, ubiquitinated by a SCF complex containing SKP2, which requires prior phosphorylation by CK1/CSNK1A1. Ubiquitinated by CBLL1/HAKAI, requires prior phosphorylation at Tyr-757. In terms of processing, O-glycosylated. O-manosylated by TMTC1, TMTC2, TMTC3 or TMTC4. Thr-287 and Thr-511 are O-mannosylated by TMTC2 or TMTC4 but not TMTC1 or TMTC3.

It localises to the cell junction. Its subcellular location is the adherens junction. The protein localises to the cell membrane. The protein resides in the endosome. It is found in the golgi apparatus. It localises to the trans-Golgi network. Its subcellular location is the cytoplasm. The protein localises to the desmosome. Its function is as follows. Cadherins are calcium-dependent cell adhesion proteins. They preferentially interact with themselves in a homophilic manner in connecting cells; cadherins may thus contribute to the sorting of heterogeneous cell types. CDH1 is involved in mechanisms regulating cell-cell adhesions, mobility and proliferation of epithelial cells. Promotes organization of radial actin fiber structure and cellular response to contractile forces, via its interaction with AMOTL2 which facilitates anchoring of radial actin fibers to CDH1 junction complexes at the cell membrane. Plays a role in the early stages of desmosome cell-cell junction formation via facilitating the recruitment of DSG2 and DSP to desmosome plaques. Has a potent invasive suppressor role. It is a ligand for integrin alpha-E/beta-7. In terms of biological role, E-Cad/CTF2 promotes non-amyloidogenic degradation of Abeta precursors. Has a strong inhibitory effect on APP C99 and C83 production. The chain is Cadherin-1 (CDH1) from Canis lupus familiaris (Dog).